The primary structure comprises 344 residues: 3-dehydroquinate synthase (344 aa).

NAD(+) contacts are provided by residues 60 to 65, 94 to 98, 118 to 119, Lys-131, Lys-140, and 158 to 161; these read DGEEYK, GVISD, TT, and FLNT. Glu-173, His-232, and His-249 together coordinate Zn(2+).

It belongs to the sugar phosphate cyclases superfamily. Dehydroquinate synthase family. Co(2+) serves as cofactor. Requires Zn(2+) as cofactor. It depends on NAD(+) as a cofactor.

The protein resides in the cytoplasm. The catalysed reaction is 7-phospho-2-dehydro-3-deoxy-D-arabino-heptonate = 3-dehydroquinate + phosphate. It functions in the pathway metabolic intermediate biosynthesis; chorismate biosynthesis; chorismate from D-erythrose 4-phosphate and phosphoenolpyruvate: step 2/7. In terms of biological role, catalyzes the conversion of 3-deoxy-D-arabino-heptulosonate 7-phosphate (DAHP) to dehydroquinate (DHQ). The polypeptide is 3-dehydroquinate synthase (Campylobacter hominis (strain ATCC BAA-381 / DSM 21671 / CCUG 45161 / LMG 19568 / NCTC 13146 / CH001A)).